Consider the following 469-residue polypeptide: Uronate isomerase (469 aa).

Belongs to the metallo-dependent hydrolases superfamily. Uronate isomerase family.

It carries out the reaction D-glucuronate = D-fructuronate. The catalysed reaction is aldehydo-D-galacturonate = keto-D-tagaturonate. It functions in the pathway carbohydrate metabolism; pentose and glucuronate interconversion. The chain is Uronate isomerase from Pectobacterium carotovorum subsp. carotovorum (strain PC1).